The sequence spans 238 residues: SPbeta prophage-derived uncharacterized protein YorM (238 aa).

The N-terminal stretch at 1–37 (MFKKLIDKHKKYVYHRINKMALFATIGLLGVGLVYSA) is a signal peptide. The span at 111–121 (TKTKKVQKTNT) shows a compositional bias: basic residues. Residues 111–132 (TKTKKVQKTNTKRNLDKAVSKS) are disordered.

This Bacillus subtilis (strain 168) protein is SPbeta prophage-derived uncharacterized protein YorM (yorM).